We begin with the raw amino-acid sequence, 272 residues long: Ribosomal RNA small subunit methyltransferase A (272 aa).

S-adenosyl-L-methionine is bound by residues Asn16, Leu18, Gly43, Glu64, Asp89, and Asn110.

This sequence belongs to the class I-like SAM-binding methyltransferase superfamily. rRNA adenine N(6)-methyltransferase family. RsmA subfamily.

It is found in the cytoplasm. The catalysed reaction is adenosine(1518)/adenosine(1519) in 16S rRNA + 4 S-adenosyl-L-methionine = N(6)-dimethyladenosine(1518)/N(6)-dimethyladenosine(1519) in 16S rRNA + 4 S-adenosyl-L-homocysteine + 4 H(+). Its function is as follows. Specifically dimethylates two adjacent adenosines (A1518 and A1519) in the loop of a conserved hairpin near the 3'-end of 16S rRNA in the 30S particle. May play a critical role in biogenesis of 30S subunits. The chain is Ribosomal RNA small subunit methyltransferase A from Pseudomonas fluorescens (strain Pf0-1).